The following is a 331-amino-acid chain: B-box zinc finger protein 21 (331 aa).

Residues Cys-5, Cys-8, Cys-28, His-34, Cys-60, Cys-63, Cys-83, and His-93 each coordinate Zn(2+). The B box-type 1; atypical zinc finger occupies 5–47; the sequence is CDVCDKEEASVFCTADEASLCGGCDHQVHHANKLASKHLRFSL. The B box-type 2; atypical zinc-finger motif lies at 60-102; it reads CDICQDKKALLFCQQDRAILCKDCDSSIHAANEHTKKHDRFLL. Composition is skewed to low complexity over residues 115 to 126 and 228 to 238; these read KPTSKSSSSSSS and NNNNNNNNNNN. 2 disordered regions span residues 115–167 and 209–241; these read KPTS…GGDA and DDDG…NTVS.

Interacts with COP1, HY5 and BBX32. Interacts with FLZ1.

Its subcellular location is the nucleus. Functionally, transcription activator that acts as a positive regulator of seedling photomorphogenesis. Acts downstream of COP1 and play an important role in early and long-term adjustment of the shade avoidance syndrome (SAS) responses in natural environments. This chain is B-box zinc finger protein 21, found in Arabidopsis thaliana (Mouse-ear cress).